A 415-amino-acid chain; its full sequence is Protein CDC73 homolog (415 aa).

The protein belongs to the CDC73 family. In terms of assembly, component of the nuclear PAF1 complex (PAF1C), which consists of VIP2/ELF7/PAF1, VIP3/SKI8/WDR61, VIP4/LEO1, VIP5/RTF1, VIP6/ELF8/CTR9 and CDC73. Expressed in root tips, shoot apex, young leaves and flowers, especially in stamen filaments and carpels.

The protein resides in the nucleus. In terms of biological role, component of the PAF1 complex (PAF1C) which is involved in histone modifications such as methylation on histone H3 'Lys-4' (H3K4me3). Involved in regulation of flowering time. Required for the expression of the flowering repressors FLC and MADS-box genes of the MAF family. Required for histone H3 trimethylation on 'Lys-4' (H3K4me3) at the FLC locus. Prevents trimethylation on 'Lys-27' (H3K27me3) at the same locus. The polypeptide is Protein CDC73 homolog (Arabidopsis thaliana (Mouse-ear cress)).